We begin with the raw amino-acid sequence, 643 residues long: Sodium-dependent nutrient amino acid transporter 1 (643 aa).

The disordered stretch occupies residues 1-38 (MELKGVQPSNGSPNGNGNGATNAASTEKTDAEKPTAER). Residues 1 to 40 (MELKGVQPSNGSPNGNGNGATNAASTEKTDAEKPTAERTN) lie on the Cytoplasmic side of the membrane. The segment covering 8 to 26 (PSNGSPNGNGNGATNAAST) has biased composition (low complexity). Residues 27–36 (EKTDAEKPTA) are compositionally biased toward basic and acidic residues. 3 helical membrane passes run 41–61 (WGNG…LGNV), 74–94 (GAFL…MYYL), and 111–131 (SVVP…ICII). 3 N-linked (GlcNAc...) asparagine glycosylation sites follow: Asn185, Asn190, and Asn200. 9 consecutive transmembrane segments (helical) span residues 231–251 (PDWK…LVIM), 260–280 (AAYF…IRAV), 309–329 (AVVQ…MFAS), 343–363 (IVTT…FAIL), 403–423 (LFSV…IVAL), 449–469 (VCGF…ILTL), 476–496 (TYVV…VYGL), 518–538 (CWSF…MATI), and 554–574 (VAGW…GLWY).

The protein belongs to the sodium:neurotransmitter symporter (SNF) (TC 2.A.22) family.

It localises to the membrane. Functionally, unusual broad substrate spectrum amino acid:sodium cotransporter that promotes absorption of the D isomers of essential amino acids. Neutral amino acids are the preferred substrates, especially methionine and phenylalanine. The sequence is that of Sodium-dependent nutrient amino acid transporter 1 from Drosophila simulans (Fruit fly).